The primary structure comprises 172 residues: Methylated-DNA--protein-cysteine methyltransferase (172 aa).

Cys142 acts as the Nucleophile; methyl group acceptor in catalysis.

It belongs to the MGMT family.

It localises to the cytoplasm. It catalyses the reaction a 6-O-methyl-2'-deoxyguanosine in DNA + L-cysteinyl-[protein] = S-methyl-L-cysteinyl-[protein] + a 2'-deoxyguanosine in DNA. It carries out the reaction a 4-O-methyl-thymidine in DNA + L-cysteinyl-[protein] = a thymidine in DNA + S-methyl-L-cysteinyl-[protein]. Involved in the cellular defense against the biological effects of O6-methylguanine (O6-MeG) and O4-methylthymine (O4-MeT) in DNA. Repairs the methylated nucleobase in DNA by stoichiometrically transferring the methyl group to a cysteine residue in the enzyme. This is a suicide reaction: the enzyme is irreversibly inactivated. The sequence is that of Methylated-DNA--protein-cysteine methyltransferase from Pyrococcus horikoshii (strain ATCC 700860 / DSM 12428 / JCM 9974 / NBRC 100139 / OT-3).